Reading from the N-terminus, the 446-residue chain is Glutamyl-tRNA(Gln) amidotransferase subunit D (446 aa).

The Asparaginase/glutaminase domain maps to serine 90–asparagine 421. Residues threonine 100, threonine 176, aspartate 177, and lysine 255 contribute to the active site.

The protein belongs to the asparaginase 1 family. GatD subfamily. As to quaternary structure, heterodimer of GatD and GatE.

It carries out the reaction L-glutamyl-tRNA(Gln) + L-glutamine + ATP + H2O = L-glutaminyl-tRNA(Gln) + L-glutamate + ADP + phosphate + H(+). Functionally, allows the formation of correctly charged Gln-tRNA(Gln) through the transamidation of misacylated Glu-tRNA(Gln) in organisms which lack glutaminyl-tRNA synthetase. The reaction takes place in the presence of glutamine and ATP through an activated gamma-phospho-Glu-tRNA(Gln). The GatDE system is specific for glutamate and does not act on aspartate. The polypeptide is Glutamyl-tRNA(Gln) amidotransferase subunit D (Sulfolobus acidocaldarius (strain ATCC 33909 / DSM 639 / JCM 8929 / NBRC 15157 / NCIMB 11770)).